The primary structure comprises 254 residues: 4-hydroxy-tetrahydrodipicolinate reductase (254 aa).

NAD(+) contacts are provided by residues 8–13 (GASGKM), 87–89 (GTT), and 111–114 (ATNM). Catalysis depends on His-143, which acts as the Proton donor/acceptor. His-144 is a (S)-2,3,4,5-tetrahydrodipicolinate binding site. Lys-147 serves as the catalytic Proton donor. 153-154 (GT) provides a ligand contact to (S)-2,3,4,5-tetrahydrodipicolinate.

Belongs to the DapB family.

Its subcellular location is the cytoplasm. The enzyme catalyses (S)-2,3,4,5-tetrahydrodipicolinate + NAD(+) + H2O = (2S,4S)-4-hydroxy-2,3,4,5-tetrahydrodipicolinate + NADH + H(+). It carries out the reaction (S)-2,3,4,5-tetrahydrodipicolinate + NADP(+) + H2O = (2S,4S)-4-hydroxy-2,3,4,5-tetrahydrodipicolinate + NADPH + H(+). The protein operates within amino-acid biosynthesis; L-lysine biosynthesis via DAP pathway; (S)-tetrahydrodipicolinate from L-aspartate: step 4/4. Catalyzes the conversion of 4-hydroxy-tetrahydrodipicolinate (HTPA) to tetrahydrodipicolinate. The sequence is that of 4-hydroxy-tetrahydrodipicolinate reductase from Campylobacter fetus subsp. fetus (strain 82-40).